The chain runs to 120 residues: Large ribosomal subunit protein uL18 (120 aa).

Belongs to the universal ribosomal protein uL18 family. As to quaternary structure, part of the 50S ribosomal subunit; part of the 5S rRNA/L5/L18/L25 subcomplex. Contacts the 5S and 23S rRNAs.

In terms of biological role, this is one of the proteins that bind and probably mediate the attachment of the 5S RNA into the large ribosomal subunit, where it forms part of the central protuberance. This chain is Large ribosomal subunit protein uL18, found in Bartonella tribocorum (strain CIP 105476 / IBS 506).